The sequence spans 1121 residues: MNNNSKRKTRPSGGGGGGGASGGISRYNANDNSLRPANNKSGAAGNSAGAGAGTGGTAIRPVAQGVYNNTFFMHSATALVGSVVEVVLRSGNIYEGVFRTFSGNFDIALELPACIKSKNLPEEGKVPKHIIFPADTVVKIVAKDFDSQYATAGAFKTDEAISDKCNGARLDEKELEPWDSGANGDIDIELDGAANGWDANEMFRKNENTFGVTSTFDDSLATYTIPLDKGDSLEFKEAEAKAEKLAAEIENNPTCRDRLDLENGDEEALFAAVERPEQDHRRDGDRERERNDRDREREERDRDRDRDRGNKPPRGAGDFQLRETMSSDRYITKQTRGPQMSHVSMSSQGGGGGGRDRDNGLMMPGVISGGGAGQGGATQSAAVLLLAGGLKASGPASSANAAGMDASGKYSMVKRKTVTQGGKVMRGNVPPNSSGGGNISAVQGGNGNPVGQSKGGYQPTMVMQNQYAYQGNSQIMHGSSQYRNPSHMSGGPSKLNGDANANTNKPLPQRQIRQYQGSQSNSLNYGGEPQPQMGKPMHSSHGGHPGQNSNSPPLQTGGQPQQQQQQQQQQQQQQAPQQQQHQNMAPQGQQPQPQRQMRSRDNQLQDLRQFGQDFQLAPTNNSPPQQQPQQPQQQQQQQQVQVQVQAQVQQQQQRALLQSASPPQQQSQQQQQQQQQQHVPMQHQGPPPHLHQAALSQPHYVPQPQQQQPQPQQQPPPPQQQQQQQHVPLHLQQKAQQPPQQQQQLVETQHQLVPKQHQQPPAQQQQPQLAPEPSQQPLPLYHPMPPPQTSPVVITSPVLLEAPPPQILTAQQPPQQQQLAATPKPDASPAPGSNTTTPTGIVSTPTTAAASSAGSEKSTPAAASSGATSGTAAAAVGATGATGSTGSTPVVKKHVLNPSAKPFTPRAGAGTPNPSRPHTPQTPVPMPGIYTTTGTHVPAAATNQPIYVVQQQHPFPPPTHPQAGQPPRLRRNNYAPMGASQMHVSATTATGQPLMAAGPMTQFIQYPHAPQQHFQSQGYAPMPMRLYPDQQPQLQFLTQTPQSTTPSPGQPHQPFHPPPQPSPAGGGPQPAYTPPTQQTYQLMCLHSQHVLPNPYFQPQPTPHHAPQNPQYQIVMQQHHAQ.

The segment covering 1 to 10 (MNNNSKRKTR) has biased composition (basic residues). The disordered stretch occupies residues 1–53 (MNNNSKRKTRPSGGGGGGGASGGISRYNANDNSLRPANNKSGAAGNSAGAGAG). Residues 12–22 (SGGGGGGGASG) show a composition bias toward gly residues. The span at 27 to 36 (YNANDNSLRP) shows a compositional bias: polar residues. Residues 37–47 (ANNKSGAAGNS) are compositionally biased toward low complexity. Residues 71–146 (FFMHSATALV…VVKIVAKDFD (76 aa)) form the Sm domain. Ser-219 and Ser-232 each carry phosphoserine. Disordered stretches follow at residues 270-376 (FAAV…GQGG), 422-458 (GKVMRGNVPPNSSGGGNISAVQGGNGNPVGQSKGGYQ), 476-935 (MHGS…TTGT), and 1039-1076 (QTPQSTTPSPGQPHQPFHPPPQPSPAGGGPQPAYTPPT). Residues 274–310 (ERPEQDHRRDGDRERERNDRDREREERDRDRDRDRGN) show a composition bias toward basic and acidic residues. Over residues 323-347 (ETMSSDRYITKQTRGPQMSHVSMSS) the composition is skewed to polar residues. Gly residues-rich tracts occupy residues 367–376 (ISGGGAGQGG) and 434–448 (SGGGNISAVQGGNGN). Polar residues-rich tracts occupy residues 476–487 (MHGSSQYRNPSH) and 499–524 (ANANTNKPLPQRQIRQYQGSQSNSLN). Composition is skewed to low complexity over residues 552–596 (PPLQ…PQRQ), 623–684 (PPQQ…MQHQ), 697–711 (QPHYVPQPQQQQPQP), and 720–773 (QQQQ…APEP). Pro residues predominate over residues 774 to 789 (SQQPLPLYHPMPPPQT). Low complexity-rich tracts occupy residues 807-825 (ILTAQQPPQQQQLAATPKP) and 835-890 (TTTP…STPV). Pro residues-rich tracts occupy residues 914-926 (PSRPHTPQTPVPM) and 1048-1062 (PGQPHQPFHPPPQPS).

Belongs to the ataxin-2 family.

The protein resides in the cytoplasm. Its function is as follows. Regulator of actin filament formation, though it does not directly assemble with actin filaments. Required for oocyte specification and oocyte positioning in the female germline. Also required for normal eye development and bristle morphology. This is Ataxin-2 homolog from Drosophila pseudoobscura pseudoobscura (Fruit fly).